Reading from the N-terminus, the 314-residue chain is MSVQYPPQHSVLLVSSGYDHTIRFWEALSGICSRTIQHADSQVNRLCISPDKKFLAAAGNPHVRLYDINTSSQMPLMTFEGHTNNVTAIAFHCDGKWLATSSEDGTVKVWDMRAPSVQRNYDHKSPVNDLLIHPNQGELLSCDQSGRVRAWDLGENSCTHELIPEEDVPMSSITVGSDGSMLIAGNNKGNCYVWRMLNHQGASLLQPVVKFQAHQRYITRCVLSPDVKHLATCSADATVNIWSTEDMSFMLERRLQGHQRWVWDCAFSADSTYLVTASSDHVARLWELSSGETIRQYSGHHKAAVCVALNDYQI.

WD repeat units lie at residues 1 to 35 (MSVQ…CSRT), 38 to 76 (HADS…QMPL), 81 to 120 (GHTN…VQRN), 122 to 161 (DHKS…CTHE), 165 to 204 (EEDV…GASL), 213 to 252 (AHQR…FMLE), and 257 to 296 (GHQR…TIRQ). Phosphoserine is present on Ser141.

The protein belongs to the WD repeat LST8 family. As to quaternary structure, the target of rapamycin complex 1 (TORC1) is composed of at least mip1, pop3/wat1, tco89, toc1 and tor2. The target of rapamycin complex 2 (TORC2) is composed of at least bit61, pop3/wat1, sin1, ste20 and tor1. Interacts with prp2.

The protein localises to the cytoplasm. Its subcellular location is the nucleus. Functionally, component of both TORC1 and TORC2, which regulate multiple cellular processes to control cell growth in response to environmental signals. Nutrient limitation and environmental stress signals cause inactivation of TORC1. Active TORC1 positively controls cell growth and ribosome biogenesis by regulating ribosomal protein gene expression. TORC1 negatively controls G1 cell-cycle arrest, sexual development and amino acid uptake. Represses mating, meiosis and sporulation efficiency by interfering with the functions of the transcription factor ste11 and the meiosis-promoting RNA-binding protein mei2. TORC2 is required for cell survival under various stress conditions. TORC2 positively controls G1 cell-cycle arrest, sexual development and amino acid uptake. Positively regulates amino acid uptake through the control of expression of amino acid permeases. May play a role in mRNA maturation as a coupling protein between splicing and synthesis and/or stabilization. The protein is Target of rapamycin complex subunit wat1 of Schizosaccharomyces pombe (strain 972 / ATCC 24843) (Fission yeast).